The following is a 541-amino-acid chain: tRNA uridine(34) acetyltransferase (541 aa).

The interval 76 to 336 (KPVRTISGVA…GEYKPYREEE (261 aa)) is radical S-adenosyl-L-methionine (rSAM). In terms of domain architecture, Radical SAM core spans 79–350 (RTISGVAVVA…ISYAKSIMPK (272 aa)). 3 residues coordinate [4Fe-4S] cluster: C96, C101, and C104. Acetyl-CoA is bound by residues K156, 467 to 470 (QLHV), 491 to 493 (YGR), and Y524. The N-acetyltransferase domain maps to 401-541 (VMYKKGIMPD…VGAYMGKYLE (141 aa)).

It belongs to the ELP3 family. Requires [4Fe-4S] cluster as cofactor.

The enzyme catalyses uridine(34) in tRNA + acetyl-CoA + S-adenosyl-L-methionine + H2O = 5-(carboxymethyl)uridine(34) in tRNA + 5'-deoxyadenosine + L-methionine + CoA + 2 H(+). The protein operates within tRNA modification. Its function is as follows. tRNA uridine(34) acetyltransferase, which mediates formation of carboxymethyluridine in the wobble base at position 34 in tRNAs. The proposed mechanism is the following: (i) recruits S-adenosyl-L-methionine and cleaves it to generate a 5'-deoxyadenosine radical (5'-dA) in the radical S-adenosyl-L-methionine (rSAM) region, (ii) hydrolyzes acetyl-CoA in the N-acetyltransferase domain and (iii) an acetyl radical is formed by the products of the two domains and (iv) is transferred onto the C5 position of uridine(34) in the bound tRNA molecule. Does not show protein lysine acetyltransferase activity. The protein is tRNA uridine(34) acetyltransferase of Methanocaldococcus jannaschii (strain ATCC 43067 / DSM 2661 / JAL-1 / JCM 10045 / NBRC 100440) (Methanococcus jannaschii).